The primary structure comprises 166 residues: MAKEQQQATDLNEKLIAVNRVSKTVKGGRIFSFTALTVVGDGNGRVGFGYGKAREVPAAIQKSMEKARRNMFTIALNEGTLHHAVKGRHTGSKVYMQPAAEGTGIIAGGAMRAVLEVVGVRNVLAKAYGSTNPINVVRATIAGLSSVKSPEMVAAKRGLTVESISE.

The region spanning 11–74 (LNEKLIAVNR…EKARRNMFTI (64 aa)) is the S5 DRBM domain.

The protein belongs to the universal ribosomal protein uS5 family. In terms of assembly, part of the 30S ribosomal subunit. Contacts proteins S4 and S8.

Its function is as follows. With S4 and S12 plays an important role in translational accuracy. Functionally, located at the back of the 30S subunit body where it stabilizes the conformation of the head with respect to the body. This Aliivibrio fischeri (strain ATCC 700601 / ES114) (Vibrio fischeri) protein is Small ribosomal subunit protein uS5.